A 376-amino-acid polypeptide reads, in one-letter code: 1-deoxy-D-xylulose 5-phosphate reductoisomerase (376 aa).

Residues Thr-12, Gly-13, Ser-14, Ile-15, Arg-39, Gln-40, and Asn-110 each contribute to the NADPH site. Lys-111 is a 1-deoxy-D-xylulose 5-phosphate binding site. An NADPH-binding site is contributed by Glu-112. A Mn(2+)-binding site is contributed by Asp-136. 1-deoxy-D-xylulose 5-phosphate contacts are provided by Ser-137, Glu-138, Ser-162, and His-185. Glu-138 is a Mn(2+) binding site. Gly-191 is a binding site for NADPH. 1-deoxy-D-xylulose 5-phosphate is bound by residues Ser-198, Asn-203, Lys-204, and Glu-207. Glu-207 is a binding site for Mn(2+).

This sequence belongs to the DXR family. Requires Mg(2+) as cofactor. The cofactor is Mn(2+).

It catalyses the reaction 2-C-methyl-D-erythritol 4-phosphate + NADP(+) = 1-deoxy-D-xylulose 5-phosphate + NADPH + H(+). The protein operates within isoprenoid biosynthesis; isopentenyl diphosphate biosynthesis via DXP pathway; isopentenyl diphosphate from 1-deoxy-D-xylulose 5-phosphate: step 1/6. Functionally, catalyzes the NADPH-dependent rearrangement and reduction of 1-deoxy-D-xylulose-5-phosphate (DXP) to 2-C-methyl-D-erythritol 4-phosphate (MEP). The sequence is that of 1-deoxy-D-xylulose 5-phosphate reductoisomerase from Treponema pallidum (strain Nichols).